The following is a 223-amino-acid chain: Cell division protein SepF (223 aa).

Residues 19 to 81 (YDDEYYDDRG…YPPPGGYRGG (63 aa)) are disordered. The span at 36–69 (PRFEDDYGRYEGRDFEDPRRDPRAGMRADLRGEP) shows a compositional bias: basic and acidic residues.

It belongs to the SepF family. In terms of assembly, homodimer. Interacts with FtsZ.

The protein resides in the cytoplasm. Functionally, cell division protein that is part of the divisome complex and is recruited early to the Z-ring. Probably stimulates Z-ring formation, perhaps through the cross-linking of FtsZ protofilaments. Its function overlaps with FtsA. The chain is Cell division protein SepF from Mycobacterium ulcerans (strain Agy99).